Reading from the N-terminus, the 156-residue chain is Arginine repressor (156 aa).

The protein belongs to the ArgR family.

Its subcellular location is the cytoplasm. It functions in the pathway amino-acid biosynthesis; L-arginine biosynthesis [regulation]. In terms of biological role, regulates arginine biosynthesis genes. This Aeromonas hydrophila subsp. hydrophila (strain ATCC 7966 / DSM 30187 / BCRC 13018 / CCUG 14551 / JCM 1027 / KCTC 2358 / NCIMB 9240 / NCTC 8049) protein is Arginine repressor.